Here is a 98-residue protein sequence, read N- to C-terminus: NADH-ubiquinone oxidoreductase chain 4L (98 aa).

Helical transmembrane passes span 1–21, 29–49, and 61–81; these read MSMVYINIFLAFIMSLMGLLM, SLLCLEGMMLSLFIMMAVAIL, and IILLVFAACEAALGLSLLVMV.

The protein belongs to the complex I subunit 4L family. As to quaternary structure, core subunit of respiratory chain NADH dehydrogenase (Complex I) which is composed of 45 different subunits.

It localises to the mitochondrion inner membrane. It carries out the reaction a ubiquinone + NADH + 5 H(+)(in) = a ubiquinol + NAD(+) + 4 H(+)(out). In terms of biological role, core subunit of the mitochondrial membrane respiratory chain NADH dehydrogenase (Complex I) which catalyzes electron transfer from NADH through the respiratory chain, using ubiquinone as an electron acceptor. Part of the enzyme membrane arm which is embedded in the lipid bilayer and involved in proton translocation. The chain is NADH-ubiquinone oxidoreductase chain 4L (MT-ND4L) from Felis catus (Cat).